A 308-amino-acid chain; its full sequence is tRNA pseudouridine synthase B (308 aa).

Asp-44 (nucleophile) is an active-site residue.

The protein belongs to the pseudouridine synthase TruB family. Type 1 subfamily.

It catalyses the reaction uridine(55) in tRNA = pseudouridine(55) in tRNA. Responsible for synthesis of pseudouridine from uracil-55 in the psi GC loop of transfer RNAs. This Bdellovibrio bacteriovorus (strain ATCC 15356 / DSM 50701 / NCIMB 9529 / HD100) protein is tRNA pseudouridine synthase B.